Reading from the N-terminus, the 655-residue chain is p-hydroxybenzoic acid efflux pump subunit AaeB (655 aa).

The next 11 helical transmembrane spans lie at 13-33, 38-58, 69-89, 93-113, 121-141, 152-172, 370-390, 407-427, 431-451, 459-479, and 482-502; these read FAVK…HFQL, WAVL…GGEP, LRII…ISMI, LLMI…SSLV, WGLS…EPLL, EIVI…PRSI, LFWL…IAVV, FIYG…VIIP, QSML…GIEV, MGAL…TFHF, and FLDS…VILL.

This sequence belongs to the aromatic acid exporter ArAE (TC 2.A.85) family.

It is found in the cell inner membrane. In terms of biological role, forms an efflux pump with AaeA. Could function as a metabolic relief valve, allowing to eliminate certain compounds when they accumulate to high levels in the cell. This chain is p-hydroxybenzoic acid efflux pump subunit AaeB, found in Salmonella enteritidis PT4 (strain P125109).